The sequence spans 244 residues: Bis(5'-nucleosyl)-tetraphosphatase PrpE [asymmetrical] (244 aa).

It belongs to the PrpE family. Requires Ni(2+) as cofactor.

The protein localises to the forespore. It carries out the reaction P(1),P(4)-bis(5'-guanosyl) tetraphosphate + H2O = GMP + GTP + 2 H(+). Its activity is regulated as follows. Inhibited by EDTA. Its function is as follows. Asymmetrically hydrolyzes Ap4p to yield AMP and ATP. Does not hydrolyze Ap2a or Ap6A. Also has an ATPase activity. Was shown to dephosphorylate phosphotyrosine but not phosphoserine or phosphothreonine from phosphorylated peptides. Involved in spore germination by controlling expression of genes coding for GerA and GerK receptors. The protein is Bis(5'-nucleosyl)-tetraphosphatase PrpE [asymmetrical] (prpE) of Bacillus subtilis (strain 168).